Reading from the N-terminus, the 217-residue chain is Probable GTP-binding protein EngB (217 aa).

The 178-residue stretch at 40-217 folds into the EngB-type G domain; sequence DVPEIAFAGR…RAAVLQDAMG (178 aa). Residues 48 to 55, 75 to 79, 95 to 98, 162 to 165, and 196 to 198 each bind GTP; these read GRSNVGKS, GRTQE, DMPG, TKAD, and TSS. Mg(2+) contacts are provided by Ser-55 and Thr-77.

This sequence belongs to the TRAFAC class TrmE-Era-EngA-EngB-Septin-like GTPase superfamily. EngB GTPase family. Mg(2+) serves as cofactor.

Its function is as follows. Necessary for normal cell division and for the maintenance of normal septation. The protein is Probable GTP-binding protein EngB of Novosphingobium aromaticivorans (strain ATCC 700278 / DSM 12444 / CCUG 56034 / CIP 105152 / NBRC 16084 / F199).